Consider the following 222-residue polypeptide: uncharacterized protein (222 aa).

The 70-residue stretch at alanine 8–aspartate 77 folds into the HTH gntR-type domain.

This is an uncharacterized protein from Mycoplasma genitalium (strain ATCC 33530 / DSM 19775 / NCTC 10195 / G37) (Mycoplasmoides genitalium).